Here is a 205-residue protein sequence, read N- to C-terminus: Small ribosomal subunit protein uS4 (205 aa).

Positions 18-46 are disordered; sequence NIWGRPKSPVNSRAYGPGQHGQRRKSKVS. The S4 RNA-binding domain maps to 94-155; the sequence is SRLDAVVYRA…RSRNMALVLE (62 aa).

Belongs to the universal ribosomal protein uS4 family. Part of the 30S ribosomal subunit. Contacts protein S5. The interaction surface between S4 and S5 is involved in control of translational fidelity.

Its function is as follows. One of the primary rRNA binding proteins, it binds directly to 16S rRNA where it nucleates assembly of the body of the 30S subunit. With S5 and S12 plays an important role in translational accuracy. The polypeptide is Small ribosomal subunit protein uS4 (Phenylobacterium zucineum (strain HLK1)).